A 250-amino-acid polypeptide reads, in one-letter code: Menaquinol:cytochrome c reductase cytochrome c subunit (250 aa).

3 consecutive transmembrane segments (helical) span residues 46 to 62, 104 to 124, and 137 to 157; these read WLVG…LTVA, VIGA…APFL, and VATG…WESV. The region spanning 178-250 is the Cytochrome c domain; sequence DTNAEGYKIA…LQKMANSSPA (73 aa). 3 residues coordinate heme c: Cys192, Cys195, and His196. Residues 229 to 250 form a disordered region; it reads MPGGIFKGTDEELQKMANSSPA.

This sequence belongs to the cytochrome b family. As to quaternary structure, the main subunits of the menaquinol:cytochrome c complex are a Rieske-type iron-sulfur protein (QcrA), a cytochrome b (QcrB) and a cytochrome c (QcrC). Requires heme c as cofactor.

It localises to the cell membrane. Functionally, component of the menaquinol:cytochrome c reductase complex. The polypeptide is Menaquinol:cytochrome c reductase cytochrome c subunit (qcrC) (Geobacillus thermodenitrificans).